Reading from the N-terminus, the 427-residue chain is Serine--tRNA ligase (427 aa).

Position 233-235 (T233–E235) interacts with L-serine. Residue R264–E266 coordinates ATP. E287 contacts L-serine. E351 to S354 contacts ATP. S387 is an L-serine binding site.

This sequence belongs to the class-II aminoacyl-tRNA synthetase family. Type-1 seryl-tRNA synthetase subfamily. As to quaternary structure, homodimer. The tRNA molecule binds across the dimer.

It is found in the cytoplasm. It catalyses the reaction tRNA(Ser) + L-serine + ATP = L-seryl-tRNA(Ser) + AMP + diphosphate + H(+). The enzyme catalyses tRNA(Sec) + L-serine + ATP = L-seryl-tRNA(Sec) + AMP + diphosphate + H(+). The protein operates within aminoacyl-tRNA biosynthesis; selenocysteinyl-tRNA(Sec) biosynthesis; L-seryl-tRNA(Sec) from L-serine and tRNA(Sec): step 1/1. Functionally, catalyzes the attachment of serine to tRNA(Ser). Is also able to aminoacylate tRNA(Sec) with serine, to form the misacylated tRNA L-seryl-tRNA(Sec), which will be further converted into selenocysteinyl-tRNA(Sec). The chain is Serine--tRNA ligase from Buchnera aphidicola subsp. Acyrthosiphon pisum (strain 5A).